Reading from the N-terminus, the 585-residue chain is GRR1-like protein 1 (585 aa).

Positions 1–48 (MGLRFPPKVLEHILSFIDSNEDRNSVSLVCKSWFETERKTRKRVFVGN) constitute an F-box domain. Lys70 contributes to the 1D-myo-inositol hexakisphosphate binding site. Residues 77–78 (DY) are interaction with auxin-responsive proteins. 1D-myo-inositol hexakisphosphate contacts are provided by residues 109-110 (KR) and Arg340. The tract at residues 343–348 (PSEPDL) is interaction with auxin-responsive proteins. Position 397-399 (397-399 (CFR)) interacts with 1D-myo-inositol hexakisphosphate. Positions 401–405 (CVIEP) are interaction with auxin-responsive proteins. Arg432 is a 1D-myo-inositol hexakisphosphate binding site. The segment at 460–461 (AF) is interaction with auxin-responsive proteins. Residues 480 to 481 (KK) and Arg505 contribute to the 1D-myo-inositol hexakisphosphate site.

Part of a SCF (SKP1-cullin-F-box) protein ligase complex. Interacts with CUL1, SKP1A/ASK1 and SKP1B/ASK2. Interacts with Aux/IAA proteins (IAA7 and IAA12) in an auxin-dependent manner. In terms of tissue distribution, ubiquitous.

The protein resides in the nucleus. It functions in the pathway protein modification; protein ubiquitination. In terms of biological role, component of SCF(ASK-cullin-F-box) E3 ubiquitin ligase complexes, which may mediate the ubiquitination and subsequent proteasomal degradation of target proteins. Auxin receptor that mediates Aux/IAA proteins proteasomal degradation and auxin-regulated transcription. Involved in embryogenesis regulation by auxin. Confers sensitivity to the virulent bacterial pathogen P.syringae. Mediates glucose repression in yeast. This chain is GRR1-like protein 1 (GRH1), found in Arabidopsis thaliana (Mouse-ear cress).